A 419-amino-acid polypeptide reads, in one-letter code: Sphingomyelin phosphodiesterase 2 (419 aa).

Residue glutamate 49 participates in Mg(2+) binding. Catalysis depends on histidine 272, which acts as the Proton acceptor. Transmembrane regions (helical) follow at residues 326–346 (FSGYVIVWGLSLLVLLCVLAA) and 354–374 (AIILCIPSVGLVLVAGAVYLF).

Belongs to the neutral sphingomyelinase family. Mg(2+) is required as a cofactor. In terms of tissue distribution, although widely expressed in all tissues examined, except the spleen, high enzymatic activity occurs only in the brain.

The protein resides in the cell membrane. It catalyses the reaction a sphingomyelin + H2O = phosphocholine + an N-acylsphing-4-enine + H(+). The catalysed reaction is an N-(acyl)-sphingosylphosphocholine + H2O = an N-acyl-sphingoid base + phosphocholine + H(+). The enzyme catalyses 1-O-octadecyl-sn-glycero-3-phosphocholine + H2O = 1-O-octadecyl-sn-glycerol + phosphocholine + H(+). It carries out the reaction 1-hexadecanoyl-sn-glycero-3-phosphocholine + H2O = 1-hexadecanoyl-sn-glycerol + phosphocholine + H(+). It catalyses the reaction a sphingosylphosphocholine + H2O = a sphingoid base + phosphocholine + H(+). The catalysed reaction is 1-O-hexadecyl-sn-glycero-3-phosphocholine + H2O = 1-O-hexadecyl-sn-glycerol + phosphocholine + H(+). It functions in the pathway lipid metabolism; sphingolipid metabolism. With respect to regulation, activated by arachidonic acid. Its function is as follows. Catalyzes, at least in vitro, the hydrolysis of sphingomyelin to form ceramide and phosphocholine. Also hydrolyzes 1-O-alkyl-2-lyso-sn-glycero-3-phosphocholine (lyso-platelet-activating factor) in vivo. Also acts on 1-acyl-2-lyso-sn-glycero-3-phosphocholine (lyso-PC) and sphingosylphosphocholine. In Mus musculus (Mouse), this protein is Sphingomyelin phosphodiesterase 2.